A 101-amino-acid chain; its full sequence is Small ribosomal subunit protein uS14 (101 aa).

Belongs to the universal ribosomal protein uS14 family. As to quaternary structure, part of the 30S ribosomal subunit. Contacts proteins S3 and S10.

Its function is as follows. Binds 16S rRNA, required for the assembly of 30S particles and may also be responsible for determining the conformation of the 16S rRNA at the A site. This chain is Small ribosomal subunit protein uS14, found in Shewanella sp. (strain ANA-3).